The following is a 165-amino-acid chain: uncharacterized protein (165 aa).

This is an uncharacterized protein from Aquifex aeolicus (strain VF5).